We begin with the raw amino-acid sequence, 4998 residues long: SCO-spondin (4998 aa).

The first 17 residues, 1-17 (MLPLALLFGMLWTQANG), serve as a signal peptide directing secretion. The 85-residue stretch at 18-102 (HWCEQIETVH…ACCPGWGGAH (85 aa)) folds into the EMI domain. A VWFD 1 domain is found at 72 to 241 (GLCAIYKPPE…KLPGSEPGCL (170 aa)). 2 cysteine pairs are disulfide-bonded: C74-C202 and C103-C240. N-linked (GlcNAc...) asparagine glycans are attached at residues N88 and N130. Residues 349-404 (CPGGQLYSDCVSSCPPSCSAVAQGEEGSCGKECVSGCECPTGLFWDGALCVPAAHC) form the TIL 1 domain. In terms of domain architecture, VWFC 1 spans 404 to 496 (CPCYHRRQRY…HGACDTGSCL (93 aa)). The VWFD 2 domain occupies 442 to 615 (AECAVGGDGH…FQVSGDGRCP (174 aa)). Intrachain disulfides connect C444/C577 and C468/C614. Residues N534 and N698 are each glycosylated (N-linked (GlcNAc...) asparagine). The region spanning 706–759 (CPGGQVYQECAPVCGHHCGEPEDCKELGICVAGCNCPPGLLWDLEGQCVPPSMC) is the TIL 2 domain. N-linked (GlcNAc...) asparagine glycans are attached at residues N771, N790, N824, and N866. Residues 892 to 1062 (GWCQASGAPH…HSWRLNPLCP (171 aa)) form the VWFD 3 domain. 3 disulfide bridges follow: C894–C1026, C916–C1061, and C937–C944. In terms of domain architecture, TIL 3 spans 1153–1209 (CEGGQVYEPCGSTCPPTCHDHHSELRWHCQVITCVEGCFCPEGTLLHGGACMKLAAC). An N-linked (GlcNAc...) asparagine glycan is attached at N1230. LDL-receptor class A domains follow at residues 1253 to 1290 (GCAE…EGCA), 1293 to 1328 (VCGE…EQGC), 1329 to 1365 (LCPH…ESCL), and 1369 to 1407 (SCIS…SHCS). Intrachain disulfides connect C1254/C1267, C1261/C1280, C1274/C1289, C1294/C1306, C1301/C1319, C1313/C1328, C1330/C1342, C1337/C1355, C1349/C1364, C1370/C1382, C1377/C1395, and C1389/C1406. The tract at residues 1406-1440 (CSLPSLPTPPGGIGQNPSTSSLDTAPSPVGSTSPA) is disordered. A compositionally biased stretch (polar residues) spans 1420–1440 (QNPSTSSLDTAPSPVGSTSPA). LDL-receptor class A domains lie at 1442–1478 (PCSL…LDCG) and 1480–1519 (PCML…DVCE). 6 cysteine pairs are disulfide-bonded: C1443-C1455, C1450-C1468, C1462-C1477, C1481-C1494, C1488-C1507, and C1501-C1518. Residue N1528 is glycosylated (N-linked (GlcNAc...) asparagine). In terms of domain architecture, LDL-receptor class A 7 spans 1533-1571 (PCPEFSCPDGTCIDFLLVCDGNPDCELADETEPSLDEQG). 9 disulfides stabilise this stretch: C1534–C1544, C1539–C1557, C1551–C1572, C1584–C1620, C1588–C1625, C1599–C1610, C1640–C1680, C1644–C1685, and C1654–C1664. 2 TSP type-1 domains span residues 1572-1626 (CGAW…EACP) and 1628-1686 (DGEW…EGCL). N1598 carries an N-linked (GlcNAc...) asparagine glycan. A glycan (N-linked (GlcNAc...) asparagine) is linked at N1687. One can recognise a TIL 4 domain in the interval 1692–1746 (GELVFRTCAPCPLTCDDISGQAACPPDRPCSSPGCWCPDGKVLNTEGQCVRPRQC). EGF-like domains lie at 1702-1741 (CPLT…GQCV) and 1742-1768 (RPRQ…CQLC). Residues 1771 to 1827 (DCGWSSWSPWAECLGPCSSQSLQWSFRSPNNPRLSGHGRQCRGIHRKARRCQTEACE) form the TSP type-1 3 domain. Cystine bridges form between C1772–C1811, C1783–C1787, and C1821–C1826. One can recognise a VWFC 2 domain in the interval 1827–1887 (EGCEQWGLMY…GMGESCCHCA (61 aa)). N1892 and N1989 each carry an N-linked (GlcNAc...) asparagine glycan. An F5/8 type C domain is found at 1929–2085 (CYSPLGLAGL…IFLWVELLGL (157 aa)). Residues 2091-2127 (LCPGSRHRCASGECAPKGGPCDGAVDCDDGSDEEGCG) form the LDL-receptor class A 8 domain. Intrachain disulfides connect C2092/C2104, C2099/C2117, and C2111/C2126. A disordered region spans residues 2119 to 2209 (DGSDEEGCGS…TFPPGAKSLH (91 aa)). Positions 2130-2144 (HASTTSRTPALSPTQ) are enriched in polar residues. Residues 2148-2158 (FPREVSEDLRQ) are compositionally biased toward basic and acidic residues. Polar residues-rich tracts occupy residues 2164-2173 (TSHSPPSSGE) and 2190-2201 (QPMQTLSATSTF). LDL-receptor class A domains are found at residues 2242–2278 (PCGP…QHCA) and 2299–2335 (LCSP…DNCV). Cystine bridges form between C2243–C2255, C2250–C2268, C2262–C2277, C2300–C2312, C2307–C2325, C2319–C2334, C2337–C2373, C2348–C2352, C2383–C2388, C2403–C2440, C2407–C2445, and C2418–C2430. TSP type-1 domains are found at residues 2336 to 2389 (DCVL…QACP) and 2391 to 2446 (AGAW…QLCP). A TIL 5 domain is found at 2468–2511 (VPPCPPSCLDPEANRSCSGHCMEGCRCPPGLLLQDSHCLPLSEC). Residues N2481 and N2530 are each glycosylated (N-linked (GlcNAc...) asparagine). 3 TSP type-1 domains span residues 2551–2605 (SCGW…TDCG), 2609–2664 (PGWT…PVCP), and 2666–2719 (PSAW…HPCT). Intrachain disulfides connect C2552-C2590, C2563-C2567, C2600-C2604, C2620-C2658, C2624-C2663, C2640-C2648, C2678-C2713, C2682-C2718, and C2693-C2703. N-linked (GlcNAc...) asparagine glycans are attached at residues N2772 and N2802. 2 consecutive TSP type-1 domains span residues 2820–2875 (ACGW…RPCR) and 2876–2919 (GPGA…QPCA). Cystine bridges form between C2821–C2859, C2832–C2836, and C2869–C2874. N2897, N2952, N2999, and N3009 each carry an N-linked (GlcNAc...) asparagine glycan. The TIL 6 domain occupies 2926 to 2978 (CPEDQQWLDCAQGPASCAHLSIPGEANQTCHPGCYCLSGMLLLNNVCVPVQDC). TSP type-1 domains lie at 3019–3086 (QPAW…PGCN) and 3088–3143 (AGGW…QPCP). Disulfide bonds link C3031–C3080, C3035–C3085, C3046–C3070, C3100–C3137, C3104–C3142, and C3115–C3127. N-linked (GlcNAc...) asparagine glycosylation occurs at N3146. One can recognise a TIL 7 domain in the interval 3151 to 3201 (EGAEYSPCGPPCPRSCDDLVHCVWRCQPGCYCPLGKVLSADGAICVKPSYC). An N-linked (GlcNAc...) asparagine glycan is attached at N3235. 2 TSP type-1 domains span residues 3244–3306 (SGDW…TACP) and 3308–3363 (DGAW…TLCT). Disulfide bonds link C3256–C3299, C3260–C3305, C3271–C3283, C3320–C3355, C3323–C3362, and C3333–C3345. N3301 carries an N-linked (GlcNAc...) asparagine glycan. N3357 carries N-linked (GlcNAc...) asparagine glycosylation. One can recognise a TIL 8 domain in the interval 3365-3421 (CGGGQDLLPCGQPCPHSCQDLSLGSTCQPGSAGCQSGCGCPPGQLSQDGLCVFPVDC). N-linked (GlcNAc...) asparagine glycans are attached at residues N3435 and N3462. A TSP type-1 15 domain is found at 3481–3529 (PGIWSSWGPWEKCSVSCGGGEQLRSRQCARPPCPGLAQQSRICHIHVCR). 3 cysteine pairs are disulfide-bonded: C3493/C3523, C3497/C3528, and C3508/C3513. N-linked (GlcNAc...) asparagine glycosylation occurs at N3638. 4 TSP type-1 domains span residues 3657–3713 (HGSF…PECP), 3727–3779 (AGGW…PSCA), 3793–3849 (NCFW…RACP), and 3851–3906 (PGGW…MPCE). Disulfide bonds link C3669–C3707, C3673–C3712, and C3685–C3697. N-linked (GlcNAc...) asparagine glycosylation is present at N3761. Disulfide bonds link C3794/C3830, C3805/C3809, C3843/C3848, C3863/C3900, C3867/C3905, and C3878/C3890. The region spanning 3909 to 3964 (CPAGMEMVSCANHCPYSCSDLQEGGMCQEDQACQLGCRCSEGFLEQDGGCVPVGHC) is the TIL 9 domain. N3986 carries an N-linked (GlcNAc...) asparagine glycan. TSP type-1 domains lie at 4006-4059 (HCAW…VPCP), 4100-4155 (PRGW…QLCL), 4157-4213 (KLER…GPCQ), and 4215-4269 (DCTW…GNCS). 12 cysteine pairs are disulfide-bonded: C4007–C4043, C4018–C4022, C4053–C4058, C4112–C4149, C4116–C4154, C4127–C4139, C4169–C4207, C4173–C4212, C4184–C4195, C4216–C4253, C4227–C4229, and C4263–C4268. N4196 is a glycosylation site (N-linked (GlcNAc...) asparagine). A glycan (N-linked (GlcNAc...) asparagine) is linked at N4267. Positions 4273-4328 (CPPPFEFQSCGSPCAGLCATHLNHRLCQDLPPCQPGCYCPKGLLEQAGSCILPEQC) constitute a TIL 10 domain. 2 N-linked (GlcNAc...) asparagine glycosylation sites follow: N4408 and N4463. The TSP type-1 24 domain occupies 4465-4516 (TCQWGPWGPWSPCQMPCSGGFKLRWRVARDTSAGECPGPWAQTESCNMGSCP). Disulfide bonds link C4466/C4500, C4477/C4481, and C4510/C4515. The 47-residue stretch at 4530-4576 (DCANQCPRSCADLWDGVQCLQGPCSPGCRCPPGQLVQDGHCVPISSC) folds into the TIL 11 domain. N-linked (GlcNAc...) asparagine glycans are attached at residues N4584, N4601, and N4606. A TSP type-1 25 domain is found at 4616-4669 (CPVLGPWSAWSECSAVCGKGTMVRHRSCEEHPDREPCQALDLQQWQECNLQACP). Disulfide bonds link C4628/C4663, C4632/C4668, and C4643/C4652. Residues 4671 to 4725 (CPPGQVLSTCATMCPSLCSHLWPGTICVREPCQLGCGCPGGQLLYNGTCIPPEAC) enclose the TIL 12 domain. 4 N-linked (GlcNAc...) asparagine glycosylation sites follow: N4716, N4756, N4799, and N4806. Positions 4777–4835 (CAPGEIWQHGKLGPCEKTCPEMNMTQAWSNCTEAQAPGCVCQLGYFRSQTGLCVPEDHC) constitute a TIL 13 domain. Residues 4835-4893 (CECWHHGSPHLPGSEWQEACESCRCLHGKSVCIRHCPELSCAQGEVIMQEPGSCCPICQ) enclose the VWFC 3 domain. 4 cysteine pairs are disulfide-bonded: C4892/C4952, C4918/C4969, C4928/C4985, and C4932/C4987. A CTCK domain is found at 4892-4991 (CQQDTLKEEP…IHSCQCSACQ (100 aa)). N4912 is a glycosylation site (N-linked (GlcNAc...) asparagine).

Belongs to the thrombospondin family. As to expression, subcommissural organ.

It localises to the secreted. The protein resides in the extracellular space. Involved in the modulation of neuronal aggregation. May be involved in developmental events during the formation of the central nervous system. The protein is SCO-spondin of Mus musculus (Mouse).